A 368-amino-acid polypeptide reads, in one-letter code: Nuclease EXOG, mitochondrial (368 aa).

A mitochondrion-targeting transit peptide spans 1–41 (MAAKSFASRLRDSRRFLNGFLAGAVVGAAGAGLTALQFFRR). The active-site Proton acceptor is the His-140. Asn-171 lines the a divalent metal cation pocket.

The protein belongs to the DNA/RNA non-specific endonuclease family. As to quaternary structure, homodimer. Requires a divalent metal cation as cofactor.

The protein resides in the mitochondrion inner membrane. In terms of biological role, endo/exonuclease with nicking activity towards supercoiled DNA, a preference for single-stranded DNA and 5'-3' exonuclease activity. The chain is Nuclease EXOG, mitochondrial (Exog) from Mus musculus (Mouse).